A 1203-amino-acid chain; its full sequence is Protein patched homolog 2 (1203 aa).

Residues 1 to 57 are Cytoplasmic-facing; that stretch reads MTRSPPLRELPPSYTPPARTAAPQILAGSLKAPLWLRAYFQGLLFSLGCGIQRHCGK. The helical transmembrane segment at 58-78 threads the bilayer; that stretch reads VLFLGLLAFGALALGLRMAII. Over 79–392 the chain is Extracellular; sequence ETNLEQLWVE…LDDILHAFSE (314 aa). N-linked (GlcNAc...) asparagine glycosylation occurs at N370. The chain crosses the membrane as a helical span at residues 393–413; that stretch reads VSAARVVGGYLLMLAYACVTM. The SSD domain maps to 394-552; it reads SAARVVGGYL…MLVFPAILSL (159 aa). Over 414 to 428 the chain is Cytoplasmic; that stretch reads LRWDCAQSQGSVGLA. The chain crosses the membrane as a helical span at residues 429-449; sequence GVLLVALAVASGLGLCALLGI. Topologically, residues 450–457 are extracellular; it reads TFNAATTQ. Residues 458 to 478 form a helical membrane-spanning segment; the sequence is VLPFLALGIGVDDVFLLAHAF. Residues 479–501 lie on the Cytoplasmic side of the membrane; that stretch reads TEALPGTPLQERMGECLQRTGTS. The chain crosses the membrane as a helical span at residues 502–522; that stretch reads VVLTSINNMAAFLMAALVPIP. Residues 523–531 are Extracellular-facing; that stretch reads ALRAFSLQA. The helical transmembrane segment at 532 to 552 threads the bilayer; the sequence is AIVVGCTFVAVMLVFPAILSL. Residues 553–686 are Cytoplasmic-facing; sequence DLRRRHCQRL…APLLLQSHAK (134 aa). A helical membrane pass occupies residues 687 to 707; the sequence is AIVLVLFGALLGLSLYGATLV. The Extracellular portion of the chain corresponds to 708–963; it reads QDGLALTDVV…WEQYLGLRRC (256 aa). An N-linked (GlcNAc...) asparagine glycan is attached at N812. A helical transmembrane segment spans residues 964 to 984; that stretch reads FLLAVCILLVCTFLVCALLLL. At 985–991 the chain is on the cytoplasmic side; that stretch reads NPWTAGL. Residues 992–1012 traverse the membrane as a helical segment; that stretch reads IVLVLAMMTVELFGIMGFLGI. K1013 is a topological domain (extracellular). A helical membrane pass occupies residues 1014–1034; it reads LSAIPVVILVASVGIGVEFTV. At 1035 to 1064 the chain is on the cytoplasmic side; it reads HVALGFLTTQGSRNLRAAHALEHTFAPVTD. The chain crosses the membrane as a helical span at residues 1065–1085; it reads GAISTLLGLLMLAGSHFDFIV. At 1086-1093 the chain is on the extracellular side; that stretch reads RYFFAALT. A helical membrane pass occupies residues 1094–1114; that stretch reads VLTLLGLLHGLVLLPVLLSIL. The Cytoplasmic portion of the chain corresponds to 1115–1203; sequence GPPPEVIQMY…SSRGPGPATG (89 aa). Residues 1171-1203 are disordered; it reads GAYIHPAPDEPPWSPAATSSGNLSSRGPGPATG. The span at 1186 to 1195 shows a compositional bias: polar residues; sequence AATSSGNLSS.

It belongs to the patched family.

Its subcellular location is the membrane. Its function is as follows. Plays a role in the control of cellular growth. May have a role in epidermal development. May act as a receptor for Sonic hedgehog (SHH). The protein is Protein patched homolog 2 (PTCH2) of Homo sapiens (Human).